The primary structure comprises 259 residues: Methyltransferase afvD (259 aa).

The protein belongs to the class I-like SAM-binding methyltransferase superfamily.

It participates in secondary metabolite biosynthesis. Its function is as follows. Methyltransferase; part of the gene cluster that mediates the biosynthesis of aflavarin, a bicoumarin that exhibits anti-insectan activity against the fungivorous beetle C.hemipterus. The protein is Methyltransferase afvD of Aspergillus flavus (strain ATCC 200026 / FGSC A1120 / IAM 13836 / NRRL 3357 / JCM 12722 / SRRC 167).